Here is a 261-residue protein sequence, read N- to C-terminus: Probable glutathione-independent glyoxalase hsp3103 (261 aa).

Residues Cys162, His163, and Glu196 contribute to the active site.

This sequence belongs to the peptidase C56 family. HSP31-like subfamily.

It catalyses the reaction methylglyoxal + H2O = (R)-lactate + H(+). Its function is as follows. Catalyzes the conversion of methylglyoxal (MG) to D-lactate in a single glutathione (GSH)-independent step. May play a role in detoxifying endogenously produced glyoxals. Involved in protection against reactive oxygen species (ROS). The chain is Probable glutathione-independent glyoxalase hsp3103 from Schizosaccharomyces pombe (strain 972 / ATCC 24843) (Fission yeast).